A 174-amino-acid polypeptide reads, in one-letter code: Cytochrome c-550-like protein (174 aa).

The N-terminal stretch at 1-37 (MPGQTQGAKRWRVPGRGWRWAGILLLVWLGLASPAAG) is a signal peptide. C82, C85, H86, and C136 together coordinate heme c.

The protein belongs to the cytochrome c family. PsbV subfamily. Heme c is required as a cofactor.

The protein localises to the cellular thylakoid membrane. Possible low-potential cytochrome c. The polypeptide is Cytochrome c-550-like protein (psbV2) (Synechococcus sp. (strain JA-3-3Ab) (Cyanobacteria bacterium Yellowstone A-Prime)).